Here is a 241-residue protein sequence, read N- to C-terminus: tRNA (guanine-N(7)-)-methyltransferase (241 aa).

Positions 1-20 are disordered; that stretch reads MTESNDTPIQPEAGDERQHR. S-adenosyl-L-methionine-binding residues include E71, E96, D123, and D146. D146 is a catalytic residue. Residues K150, D182, and 219–222 each bind substrate; that span reads TKFE.

This sequence belongs to the class I-like SAM-binding methyltransferase superfamily. TrmB family.

The catalysed reaction is guanosine(46) in tRNA + S-adenosyl-L-methionine = N(7)-methylguanosine(46) in tRNA + S-adenosyl-L-homocysteine. Its pathway is tRNA modification; N(7)-methylguanine-tRNA biosynthesis. Catalyzes the formation of N(7)-methylguanine at position 46 (m7G46) in tRNA. This chain is tRNA (guanine-N(7)-)-methyltransferase, found in Pseudomonas fluorescens (strain ATCC BAA-477 / NRRL B-23932 / Pf-5).